We begin with the raw amino-acid sequence, 533 residues long: Ribonuclease III domain-containing protein RNC1, chloroplastic (533 aa).

A chloroplast-targeting transit peptide spans 1-30 (MAPPAMAFQALALGPLPLPLPAARRRRRVR). Disordered regions lie at residues 31–57 (VLAVAADHTPPPPPSPSSPPEPANSPS) and 66–85 (RKKAVSPKKKHPPRRFILKP). Positions 39–53 (TPPPPPSPSSPPEPA) are enriched in pro residues. The segment covering 69-82 (AVSPKKKHPPRRFI) has biased composition (basic residues). 2 RNase III domains span residues 164 to 279 (LLYL…LCFG) and 411 to 511 (EHPR…CVYG).

As to quaternary structure, interacts with RNA. Part of large ribonucleo-protein particles that contain CAF1 and/or CAF2.

It localises to the plastid. The protein resides in the chloroplast. In terms of biological role, binds specific group II introns in chloroplasts and facilitates their splicing. Acts on both subgroup IIA and subgroup IIB introns. The substrates of the subgroup II also require the CRM domain proteins CAF1 or CAF2. Binds both single-stranded and double-stranded RNA non-specifically, but lacks endonuclease activity. Required for plastid ribosome biogenesis. This is Ribonuclease III domain-containing protein RNC1, chloroplastic from Oryza sativa subsp. japonica (Rice).